A 1155-amino-acid polypeptide reads, in one-letter code: Alpha,alpha-trehalose-phosphate synthase [UDP-forming] 1 (1155 aa).

Residues 56-94 (LQRRRSVSSRGGSLRGSMDSLNDSGQNGAEDVIGVEDEE) form a disordered region. The segment covering 63 to 72 (SSRGGSLRGS) has biased composition (low complexity).

It in the N-terminal section; belongs to the glycosyltransferase 20 family. This sequence in the C-terminal section; belongs to the gob-1 trehalose phosphatase family.

It carries out the reaction D-glucose 6-phosphate + UDP-alpha-D-glucose = alpha,alpha-trehalose 6-phosphate + UDP + H(+). Catalyzes the production of trehalose from glucose-6-phosphate and UDP-alpha-D-glucose in a 2 step process. The sequence is that of Alpha,alpha-trehalose-phosphate synthase [UDP-forming] 1 (tps-1) from Aphelenchoides avenae (Mycophagous nematode worm).